Consider the following 321-residue polypeptide: tRNA-dihydrouridine synthase B (321 aa).

FMN contacts are provided by residues 16–18 (PMA) and glutamine 70. Cysteine 100 (proton donor) is an active-site residue. Residues lysine 139, 200-202 (NGD), and 224-225 (GR) each bind FMN.

It belongs to the Dus family. DusB subfamily. The cofactor is FMN.

It carries out the reaction a 5,6-dihydrouridine in tRNA + NAD(+) = a uridine in tRNA + NADH + H(+). The catalysed reaction is a 5,6-dihydrouridine in tRNA + NADP(+) = a uridine in tRNA + NADPH + H(+). In terms of biological role, catalyzes the synthesis of 5,6-dihydrouridine (D), a modified base found in the D-loop of most tRNAs, via the reduction of the C5-C6 double bond in target uridines. The protein is tRNA-dihydrouridine synthase B of Escherichia coli O157:H7.